Consider the following 269-residue polypeptide: MEMO1 family protein TV1383 (269 aa).

It belongs to the MEMO1 family.

This Thermoplasma volcanium (strain ATCC 51530 / DSM 4299 / JCM 9571 / NBRC 15438 / GSS1) protein is MEMO1 family protein TV1383.